Reading from the N-terminus, the 389-residue chain is Phospho-N-acetylmuramoyl-pentapeptide-transferase (389 aa).

Transmembrane regions (helical) follow at residues 21–41 (FITFRAVFATLTALVIGLVTG), 70–90 (GTPTMGGVLILVSIGISTLLW), 97–117 (FIWVVLIVTLGFGAVGWVDDY), 134–154 (YMWQSIIGLFAAIYLAFSVSA), 189–209 (TISYPLGVWGFIALTYFVIVG), 222–242 (GLAIMPTVMVGTALGLFAYLT), 259–279 (AGELIIFCGAMAGAGLAFLWF), 286–306 (VFMGDVGALALGGALGTIAVI), 311–331 (VVLFIMGGIFVVETLSVMLQV), and 366–386 (QVVVRFWIITMMLVLFGLSTL).

It belongs to the glycosyltransferase 4 family. MraY subfamily. The cofactor is Mg(2+).

It localises to the cell inner membrane. The enzyme catalyses UDP-N-acetyl-alpha-D-muramoyl-L-alanyl-gamma-D-glutamyl-meso-2,6-diaminopimeloyl-D-alanyl-D-alanine + di-trans,octa-cis-undecaprenyl phosphate = di-trans,octa-cis-undecaprenyl diphospho-N-acetyl-alpha-D-muramoyl-L-alanyl-D-glutamyl-meso-2,6-diaminopimeloyl-D-alanyl-D-alanine + UMP. Its pathway is cell wall biogenesis; peptidoglycan biosynthesis. Its function is as follows. Catalyzes the initial step of the lipid cycle reactions in the biosynthesis of the cell wall peptidoglycan: transfers peptidoglycan precursor phospho-MurNAc-pentapeptide from UDP-MurNAc-pentapeptide onto the lipid carrier undecaprenyl phosphate, yielding undecaprenyl-pyrophosphoryl-MurNAc-pentapeptide, known as lipid I. This Janthinobacterium sp. (strain Marseille) (Minibacterium massiliensis) protein is Phospho-N-acetylmuramoyl-pentapeptide-transferase.